We begin with the raw amino-acid sequence, 196 residues long: ATP-dependent Clp protease proteolytic subunit (196 aa).

Ser99 functions as the Nucleophile in the catalytic mechanism. His124 is a catalytic residue.

This sequence belongs to the peptidase S14 family. As to quaternary structure, fourteen ClpP subunits assemble into 2 heptameric rings which stack back to back to give a disk-like structure with a central cavity, resembling the structure of eukaryotic proteasomes.

Its subcellular location is the cytoplasm. The enzyme catalyses Hydrolysis of proteins to small peptides in the presence of ATP and magnesium. alpha-casein is the usual test substrate. In the absence of ATP, only oligopeptides shorter than five residues are hydrolyzed (such as succinyl-Leu-Tyr-|-NHMec, and Leu-Tyr-Leu-|-Tyr-Trp, in which cleavage of the -Tyr-|-Leu- and -Tyr-|-Trp bonds also occurs).. Functionally, cleaves peptides in various proteins in a process that requires ATP hydrolysis. Has a chymotrypsin-like activity. Plays a major role in the degradation of misfolded proteins. The polypeptide is ATP-dependent Clp protease proteolytic subunit (Helicobacter hepaticus (strain ATCC 51449 / 3B1)).